The chain runs to 251 residues: MRRPLVAGNWKMHGTHSSVAELIKGLRQLALPSGVDVAVMPPCLFISQVIQGLAGKAIDVGAQNSAVEPMQGALTGETAPSQLADVGCSMVLVGHSERRLILGESDEVVSRKFAAAQSCGLVPVLCVGETRAEREAGKTLEVVARQLGSVIDELGVGAFARAVVAYEPVWAIGTGLTASPAQAQEVHAAIRAQLAAENAEVAKGVRLLYGGSVKAASAAELFGMPDIDGGLVGGASLNADEFGAICRAAGS.

9–11 (NWK) provides a ligand contact to substrate. His95 acts as the Electrophile in catalysis. The active-site Proton acceptor is the Glu167. Residues Gly173, Ser212, and 233 to 234 (GG) contribute to the substrate site.

Belongs to the triosephosphate isomerase family. In terms of assembly, homodimer.

The protein resides in the cytoplasm. It catalyses the reaction D-glyceraldehyde 3-phosphate = dihydroxyacetone phosphate. Its pathway is carbohydrate biosynthesis; gluconeogenesis. It participates in carbohydrate degradation; glycolysis; D-glyceraldehyde 3-phosphate from glycerone phosphate: step 1/1. Functionally, involved in the gluconeogenesis. Catalyzes stereospecifically the conversion of dihydroxyacetone phosphate (DHAP) to D-glyceraldehyde-3-phosphate (G3P). The chain is Triosephosphate isomerase from Pseudomonas aeruginosa (strain LESB58).